Reading from the N-terminus, the 61-residue chain is Small ribosomal subunit protein uS14 (61 aa).

Residues Cys24, Cys27, Cys40, and Cys43 each contribute to the Zn(2+) site.

Belongs to the universal ribosomal protein uS14 family. Zinc-binding uS14 subfamily. As to quaternary structure, part of the 30S ribosomal subunit. Contacts proteins S3 and S10. It depends on Zn(2+) as a cofactor.

Its function is as follows. Binds 16S rRNA, required for the assembly of 30S particles and may also be responsible for determining the conformation of the 16S rRNA at the A site. This is Small ribosomal subunit protein uS14 from Mesomycoplasma hyopneumoniae (strain 232) (Mycoplasma hyopneumoniae).